The following is a 447-amino-acid chain: UDP-glycosyltransferase 79B9 (447 aa).

UDP-alpha-D-glucose-binding positions include S260, V319–Q321, H336–E344, and L358–Q361.

This sequence belongs to the UDP-glycosyltransferase family.

The protein is UDP-glycosyltransferase 79B9 (UGT79B9) of Arabidopsis thaliana (Mouse-ear cress).